A 434-amino-acid polypeptide reads, in one-letter code: Enolase (434 aa).

Gln163 is a (2R)-2-phosphoglycerate binding site. Glu205 serves as the catalytic Proton donor. Positions 242, 291, and 318 each coordinate Mg(2+). Residues Lys343, Arg372, Ser373, and Lys394 each contribute to the (2R)-2-phosphoglycerate site. The Proton acceptor role is filled by Lys343.

This sequence belongs to the enolase family. Mg(2+) serves as cofactor.

Its subcellular location is the cytoplasm. It localises to the secreted. The protein localises to the cell surface. It carries out the reaction (2R)-2-phosphoglycerate = phosphoenolpyruvate + H2O. It participates in carbohydrate degradation; glycolysis; pyruvate from D-glyceraldehyde 3-phosphate: step 4/5. Its function is as follows. Catalyzes the reversible conversion of 2-phosphoglycerate (2-PG) into phosphoenolpyruvate (PEP). It is essential for the degradation of carbohydrates via glycolysis. This Streptococcus sanguinis (strain SK36) protein is Enolase.